We begin with the raw amino-acid sequence, 506 residues long: Probable alpha-L-arabinofuranosidase B (506 aa).

Residues 1–26 (MLSQPSRERAFVLALGLVVSSSLAAA) form the signal peptide. A catalytic region spans residues 27-343 (APCDIYSSGG…ADIVAANYAV (317 aa)). 3 cysteine pairs are disulfide-bonded: Cys29-Cys39, Cys89-Cys94, and Cys184-Cys185. Asp227 is a substrate binding site. Residue Glu229 is the Nucleophile of the active site. Asn230 provides a ligand contact to substrate. Asn285 carries N-linked (GlcNAc...) asparagine glycosylation. Gly304 contributes to the substrate binding site. Catalysis depends on Asp305, which acts as the Proton donor. Positions 344-506 (TSLTSGPALT…VSWVISSGFA (163 aa)) are ABD. A disulfide bridge links Cys409 with Cys447. Substrate-binding residues include His424, Asn426, Phe427, Asp443, His471, Leu476, and Asp496.

The protein belongs to the glycosyl hydrolase 54 family.

Its subcellular location is the secreted. It catalyses the reaction Hydrolysis of terminal non-reducing alpha-L-arabinofuranoside residues in alpha-L-arabinosides.. It functions in the pathway glycan metabolism; L-arabinan degradation. Its function is as follows. Alpha-L-arabinofuranosidase involved in the degradation of arabinoxylan, a major component of plant hemicellulose. Able to hydrolyze 1,5-, 1,3- and 1,2-alpha-linkages not only in L-arabinofuranosyl oligosaccharides, but also in polysaccharides containing terminal non-reducing L-arabinofuranoses in side chains, like L-arabinan, arabinogalactan and arabinoxylan. The sequence is that of Probable alpha-L-arabinofuranosidase B (abfB) from Aspergillus clavatus (strain ATCC 1007 / CBS 513.65 / DSM 816 / NCTC 3887 / NRRL 1 / QM 1276 / 107).